The following is a 386-amino-acid chain: Protein U3 (386 aa).

In Human herpesvirus 6B (strain Z29) (HHV-6 variant B), this protein is Protein U3 (U3).